The chain runs to 859 residues: DNA mismatch repair protein MutS (859 aa).

617 to 624 (GPNMGGKS) contacts ATP. The segment at 799–821 (ETTSLPHEQPRAKPGKPAVPQQS) is disordered.

This sequence belongs to the DNA mismatch repair MutS family.

Functionally, this protein is involved in the repair of mismatches in DNA. It is possible that it carries out the mismatch recognition step. This protein has a weak ATPase activity. The sequence is that of DNA mismatch repair protein MutS from Pseudomonas syringae pv. syringae (strain B728a).